Here is a 301-residue protein sequence, read N- to C-terminus: MAHVRTYNPRVRVGNWKEDVTLEEETSKEFILQKDRGELTVQKEGALKQSILKPVSLSVSQDGFLHFGDTVMLVNCGDGGHMQRSPCVLSIIADSSNVTSHSQTNTGPHLLGPLQVGGAHSMDPCVRNTFIIISVDGSSDGEVVRYDQSFALKTTGGFAGELFLASDHKSFQKCAKKSRLQELSLVEEFDFLCWWKVLYFDPQDRLENEGYPVQVNNKVLISHCKTNQCLAALSNHILWSQFGKEYELTAHTFLDSHKAEQDNNHWLFSTAHPANQSQSLLQLQQEEHKENQEDTQVKDCS.

The protein localises to the cytoplasm. It localises to the cytoskeleton. The protein resides in the cilium axoneme. In terms of biological role, microtubule inner protein (MIP) part of the dynein-decorated doublet microtubules (DMTs) in cilia axoneme, which is required for motile cilia beating. This Danio rerio (Zebrafish) protein is Cilia- and flagella-associated protein 161.